The primary structure comprises 307 residues: Aspartate carbamoyltransferase catalytic subunit (307 aa).

Carbamoyl phosphate is bound by residues Arg-54 and Thr-55. An L-aspartate-binding site is contributed by Lys-83. Residues Arg-104, His-132, and Gln-135 each contribute to the carbamoyl phosphate site. Positions 165 and 228 each coordinate L-aspartate. 2 residues coordinate carbamoyl phosphate: Leu-267 and Pro-268.

It belongs to the aspartate/ornithine carbamoyltransferase superfamily. ATCase family. In terms of assembly, heterododecamer (2C3:3R2) of six catalytic PyrB chains organized as two trimers (C3), and six regulatory PyrI chains organized as three dimers (R2).

It catalyses the reaction carbamoyl phosphate + L-aspartate = N-carbamoyl-L-aspartate + phosphate + H(+). Its pathway is pyrimidine metabolism; UMP biosynthesis via de novo pathway; (S)-dihydroorotate from bicarbonate: step 2/3. In terms of biological role, catalyzes the condensation of carbamoyl phosphate and aspartate to form carbamoyl aspartate and inorganic phosphate, the committed step in the de novo pyrimidine nucleotide biosynthesis pathway. The protein is Aspartate carbamoyltransferase catalytic subunit of Clostridium botulinum (strain Alaska E43 / Type E3).